The sequence spans 111 residues: Prophage-derived-like uncharacterized protein YozM (111 aa).

An N-terminal signal peptide occupies residues Met-1–Glu-24.

The polypeptide is Prophage-derived-like uncharacterized protein YozM (yozM) (Bacillus subtilis (strain 168)).